The following is a 278-amino-acid chain: DNA adenine methylase (278 aa).

Residues W10, K14, D54, and D181 each coordinate S-adenosyl-L-methionine.

Belongs to the N(4)/N(6)-methyltransferase family.

It catalyses the reaction a 2'-deoxyadenosine in DNA + S-adenosyl-L-methionine = an N(6)-methyl-2'-deoxyadenosine in DNA + S-adenosyl-L-homocysteine + H(+). In terms of biological role, an alpha subtype methylase, recognizes the double-stranded sequence 5'-GATC-3' and methylates A-2. May be involved in methyl-directed DNA mismatch repair, initiation of chromosome replication and gene expression. In Escherichia coli O157:H7, this protein is DNA adenine methylase (dam).